Here is a 128-residue protein sequence, read N- to C-terminus: uncharacterized protein (128 aa).

This is an uncharacterized protein from Enterobacteria phage T4 (Bacteriophage T4).